A 1704-amino-acid polypeptide reads, in one-letter code: Phospholipid-transporting ATPase ABCA3 (1704 aa).

Asparagine 14 is a glycosylation site (N-linked (GlcNAc...) asparagine). A helical membrane pass occupies residues 22–42 (VLVTVLELFLPLLFSGILIWL). Asparagine 53, asparagine 124, asparagine 140, and asparagine 228 each carry an N-linked (GlcNAc...) asparagine glycan. 6 consecutive transmembrane segments (helical) span residues 261-283 (YQLPLLLMLSFTYTSLTIIRAVV), 307-327 (AWFLMFFLFFLIVVSFMTLLF), 344-364 (SLVLAFLLCFAISSISFSFMV), 373-393 (IAAAVGGFLYFFTYTPYFFVA), 405-425 (LLSCLLSNVAMAMGAQLIGKF), and 447-467 (FCFGQVLGMLLLDSALYGLVT). The 234-residue stretch at 530–763 (IKIKHLSKVF…YGAGYHMTLV (234 aa)) folds into the ABC transporter 1 domain. 566-573 (GHNGAGKT) provides a ligand contact to ATP. Residue asparagine 620 is glycosylated (N-linked (GlcNAc...) asparagine). Transmembrane regions (helical) follow at residues 925–945 (MVAAQVLVPLTCLTLALLAIH), 1100–1120 (IALNLLIAMAFLASTFSILAV), 1144–1164 (SALLWDLISFLVPSLLLLVVF), 1183–1203 (LLLMLYGWAIIPLMYLMSFFF), 1213–1233 (LTIFNILSGIATFIMVTIMRI), 1245–1265 (LDHVFLVLPNHCLGMAVSNFY), and 1310–1330 (MAASGGIYLTLLFLIETNLLW). Asparagine 1350 is a glycosylation site (N-linked (GlcNAc...) asparagine). Residues 1381–1614 (LIINELSKVY…FGSGYSLQAK (234 aa)) enclose the ABC transporter 2 domain. 1416–1423 (GFNGAGKT) is an ATP binding site.

This sequence belongs to the ABC transporter superfamily. ABCA family. As to quaternary structure, homooligomer; disulfide-linked. Post-translationally, N-glycosylated. Localization at intracellular vesicles is accompanied by processing of oligosaccharide from high mannose type to complex type. N-linked glycosylation at Asn-124 and Asn-140 is required for stability and efficient anterograde trafficking and prevents from proteasomal degradation. Proteolytically cleaved by CTSL and to a lower extent by CTSB within multivesicular bodies (MVB) and lamellar bodies (LB) leading to a mature form of 150 kDa. In terms of tissue distribution, highly expressed in the lung and moderately expressed in the kidney, adipose, macrophage, and spleen.

It is found in the endosome. It localises to the multivesicular body membrane. Its subcellular location is the cytoplasmic vesicle membrane. The protein localises to the late endosome membrane. The protein resides in the lysosome membrane. It catalyses the reaction a 1,2-diacyl-sn-glycero-3-phospho-(1'-sn-glycerol)(in) + ATP + H2O = a 1,2-diacyl-sn-glycero-3-phospho-(1'-sn-glycerol)(out) + ADP + phosphate + H(+). The catalysed reaction is a 1,2-diacyl-sn-glycero-3-phosphocholine(in) + ATP + H2O = a 1,2-diacyl-sn-glycero-3-phosphocholine(out) + ADP + phosphate + H(+). The enzyme catalyses ATP + H2O + phospholipidSide 1 = ADP + phosphate + phospholipidSide 2.. It carries out the reaction ATP + H2O + xenobioticSide 1 = ADP + phosphate + xenobioticSide 2.. It catalyses the reaction 1,2-dihexadecanoyl-sn-glycero-3-phosphocholine(in) + ATP + H2O = 1,2-dihexadecanoyl-sn-glycero-3-phosphocholine(out) + ADP + phosphate + H(+). The catalysed reaction is cholesterol(in) + ATP + H2O = cholesterol(out) + ADP + phosphate + H(+). In terms of biological role, catalyzes the ATP-dependent transport of phospholipids such as phosphatidylcholine and phosphoglycerol from the cytoplasm into the lumen side of lamellar bodies, in turn participates in the lamellar bodies biogenesis and homeostasis of pulmonary surfactant. Transports preferentially phosphatidylcholine containing short acyl chains. In addition plays a role as an efflux transporter of miltefosine across macrophage membranes and free cholesterol (FC) through intralumenal vesicles by removing FC from the cell as a component of surfactant and protects cells from free cholesterol toxicity. The chain is Phospholipid-transporting ATPase ABCA3 (Abca3) from Mus musculus (Mouse).